The sequence spans 190 residues: UPF0301 protein Reut_A0705 (190 aa).

It belongs to the UPF0301 (AlgH) family.

This Cupriavidus pinatubonensis (strain JMP 134 / LMG 1197) (Cupriavidus necator (strain JMP 134)) protein is UPF0301 protein Reut_A0705.